Here is a 455-residue protein sequence, read N- to C-terminus: Exodeoxyribonuclease 7 large subunit (455 aa).

This sequence belongs to the XseA family. Heterooligomer composed of large and small subunits.

The protein resides in the cytoplasm. It carries out the reaction Exonucleolytic cleavage in either 5'- to 3'- or 3'- to 5'-direction to yield nucleoside 5'-phosphates.. Functionally, bidirectionally degrades single-stranded DNA into large acid-insoluble oligonucleotides, which are then degraded further into small acid-soluble oligonucleotides. The protein is Exodeoxyribonuclease 7 large subunit of Escherichia coli (strain SMS-3-5 / SECEC).